The sequence spans 161 residues: Globin CTT-VIIB-8 (161 aa).

The N-terminal stretch at 1-16 (MKFFAVLALCIVGAIA) is a signal peptide. The Globin domain occupies 18-161 (PLTADEASLV…NTYAIVVPRL (144 aa)). Heme b is bound by residues H76 and H111.

This sequence belongs to the globin family. Homodimer.

In Chironomus thummi thummi (Midge), this protein is Globin CTT-VIIB-8 (CTT-7B8).